The sequence spans 476 residues: Adenosylhomocysteinase (476 aa).

Residues threonine 62, aspartate 141, and glutamate 201 each coordinate substrate. 202 to 204 (TTT) serves as a coordination point for NAD(+). Lysine 231 and aspartate 235 together coordinate substrate. NAD(+) contacts are provided by residues asparagine 236, 265-270 (GYGDVG), glutamate 288, asparagine 323, 344-346 (IGH), and asparagine 389.

It belongs to the adenosylhomocysteinase family. It depends on NAD(+) as a cofactor.

The protein resides in the cytoplasm. The enzyme catalyses S-adenosyl-L-homocysteine + H2O = L-homocysteine + adenosine. It functions in the pathway amino-acid biosynthesis; L-homocysteine biosynthesis; L-homocysteine from S-adenosyl-L-homocysteine: step 1/1. Functionally, may play a key role in the regulation of the intracellular concentration of adenosylhomocysteine. This Myxococcus xanthus (strain DK1622) protein is Adenosylhomocysteinase.